The sequence spans 145 residues: Nucleoside diphosphate kinase (145 aa).

Residues lysine 11, phenylalanine 59, arginine 87, threonine 93, arginine 104, and asparagine 114 each contribute to the ATP site. The active-site Pros-phosphohistidine intermediate is histidine 117.

Belongs to the NDK family. Homotetramer. Mg(2+) is required as a cofactor.

The protein resides in the cytoplasm. The enzyme catalyses a 2'-deoxyribonucleoside 5'-diphosphate + ATP = a 2'-deoxyribonucleoside 5'-triphosphate + ADP. The catalysed reaction is a ribonucleoside 5'-diphosphate + ATP = a ribonucleoside 5'-triphosphate + ADP. Functionally, major role in the synthesis of nucleoside triphosphates other than ATP. The ATP gamma phosphate is transferred to the NDP beta phosphate via a ping-pong mechanism, using a phosphorylated active-site intermediate. The polypeptide is Nucleoside diphosphate kinase (Myxococcus xanthus).